A 323-amino-acid polypeptide reads, in one-letter code: Aldo-keto reductase family 1 member C18 (323 aa).

NADP(+)-binding positions include 20–24 (GFGTY) and D50. Catalysis depends on Y55, which acts as the Proton donor. A substrate-binding site is contributed by H117. NADP(+) contacts are provided by residues 166 to 167 (SN), Q190, 216 to 221 (YGALGT), and 270 to 280 (KSFNEERIREN).

It belongs to the aldo/keto reductase family. In terms of assembly, monomer. In terms of processing, the N-terminus is blocked. Corpus luteum (large luteal cells).

Its subcellular location is the cytoplasm. It catalyses the reaction (17R,20S)-17,20-dihydroxypregn-4-en-3-one + NADP(+) = 17alpha-hydroxyprogesterone + NADPH + H(+). It carries out the reaction (17R,20S)-17,20-dihydroxypregn-4-en-3-one + NAD(+) = 17alpha-hydroxyprogesterone + NADH + H(+). Its function is as follows. Catalyzes the conversion of progesterone into 20-alpha-dihydroprogesterone (20 alpha-OHP). The protein is Aldo-keto reductase family 1 member C18 (Akr1c18) of Rattus norvegicus (Rat).